Reading from the N-terminus, the 78-residue chain is Short neurotoxin SNTX6 (78 aa).

The first 21 residues, 1–21 (MKTLLLTFLVVTIVCLDLGYT), serve as a signal peptide directing secretion. 4 disulfide bridges follow: C24/C40, C33/C58, C62/C70, and C71/C76.

The protein belongs to the three-finger toxin family. Short-chain subfamily. In terms of tissue distribution, expressed by the venom gland.

The protein localises to the secreted. This three-finger toxin binds and inhibits the nicotinic acetylcholine receptor (nAChR). The chain is Short neurotoxin SNTX6 from Ophiophagus hannah (King cobra).